The primary structure comprises 62 residues: Photosystem II reaction center protein K (62 aa).

The propeptide occupies 1–25 (MPNILSLTCICFNSVLYPTTSFFFA). The helical transmembrane segment at 33–53 (IFNPIVDVMPVIPLFFFLLAF) threads the bilayer.

Belongs to the PsbK family. PSII is composed of 1 copy each of membrane proteins PsbA, PsbB, PsbC, PsbD, PsbE, PsbF, PsbH, PsbI, PsbJ, PsbK, PsbL, PsbM, PsbT, PsbX, PsbY, PsbZ, Psb30/Ycf12, at least 3 peripheral proteins of the oxygen-evolving complex and a large number of cofactors. It forms dimeric complexes.

It localises to the plastid. Its subcellular location is the chloroplast thylakoid membrane. One of the components of the core complex of photosystem II (PSII). PSII is a light-driven water:plastoquinone oxidoreductase that uses light energy to abstract electrons from H(2)O, generating O(2) and a proton gradient subsequently used for ATP formation. It consists of a core antenna complex that captures photons, and an electron transfer chain that converts photonic excitation into a charge separation. This Agrostis stolonifera (Creeping bentgrass) protein is Photosystem II reaction center protein K.